The chain runs to 91 residues: Small ribosomal subunit protein uS19 (91 aa).

It belongs to the universal ribosomal protein uS19 family.

Functionally, protein S19 forms a complex with S13 that binds strongly to the 16S ribosomal RNA. This Synechococcus sp. (strain CC9311) protein is Small ribosomal subunit protein uS19.